We begin with the raw amino-acid sequence, 152 residues long: Small ribosomal subunit protein uS19 (152 aa).

The protein belongs to the universal ribosomal protein uS19 family.

Its function is as follows. Protein S19 forms a complex with S13 that binds strongly to the 16S ribosomal RNA. This chain is Small ribosomal subunit protein uS19 (rps19), found in Methanocaldococcus jannaschii (strain ATCC 43067 / DSM 2661 / JAL-1 / JCM 10045 / NBRC 100440) (Methanococcus jannaschii).